A 180-amino-acid chain; its full sequence is uncharacterized protein (180 aa).

The tract at residues 138-180 (SVMPVPMPQQNSDNGSTPHIVDSSKSKDKSSNDGDNGVFTGDE) is disordered. Over residues 145–154 (PQQNSDNGST) the composition is skewed to polar residues. Positions 159-169 (DSSKSKDKSSN) are enriched in basic and acidic residues.

This is an uncharacterized protein from Acidianus filamentous virus 2 (isolate Italy/Pozzuoli) (AFV-2).